The primary structure comprises 460 residues: MLKIYNTLSGKKEIFKPIEEGKVGMYVCGNTVYDFCHIGHARAMISFDVISRFIRHLGYELNYVRNITDVDDKIIKRAEENNESTQSLTERMIAAQREDELRLGNKMPDREPKATEFMQEIIDMVQVLIDKGFAYQGTSGDVYYRATKFKDYGKLNNRKLEDMLAGARIDVEVAKEHPADFVLWKQAKAGEVSWSSPWGEGRPGWHIECSAMSTNCLGSHFDIHGGGPDLKFPHHENEIAQSEAATGKEYVNYWMHCGAVRVNNEKMSKSLGNFFTVRDVLAKFNPEVVRYLMVSSQYRSAIDYSDQSLLEAKVALERLYTALRQQQVAESFEPTVFTERFEEAMKDDFNTAVAVSVLFELVRELNKAKTEDANKASLLAAELRSLAELLGLLYQDPEYFLQNSTVSEGLGEVAIQALIDERTQARKDKNFARSDEIRDELASQGIELLDSREGTTWTRS.

Residue C28 coordinates Zn(2+). Positions 30–40 (NTVYDFCHIGH) match the 'HIGH' region motif. Zn(2+)-binding residues include C209, H234, and E238. Residues 266-270 (KMSKS) carry the 'KMSKS' region motif. ATP is bound at residue K269.

It belongs to the class-I aminoacyl-tRNA synthetase family. As to quaternary structure, monomer. It depends on Zn(2+) as a cofactor.

The protein localises to the cytoplasm. The catalysed reaction is tRNA(Cys) + L-cysteine + ATP = L-cysteinyl-tRNA(Cys) + AMP + diphosphate. This chain is Cysteine--tRNA ligase, found in Marinomonas sp. (strain MWYL1).